A 384-amino-acid chain; its full sequence is UPF0496 protein At3g28310/At3g28320 (384 aa).

A coiled-coil region spans residues 184-215 (QESLFDRVTETKERIAKEIEEVQKRISNVNTA). The next 2 membrane-spanning stretches (helical) occupy residues 217 to 237 (IVSH…CIAL) and 242 to 262 (VGAP…VQWV). The stretch at 264 to 361 (VNYVLNNSLE…TTKITEVCET (98 aa)) forms a coiled coil.

It belongs to the UPF0496 family.

Its subcellular location is the membrane. This is UPF0496 protein At3g28310/At3g28320 from Arabidopsis thaliana (Mouse-ear cress).